Reading from the N-terminus, the 119-residue chain is Multidrug resistance protein EbrB (119 aa).

The next 4 helical transmembrane spans lie at 3-23, 31-51, 59-79, and 81-101; these read GMIF…MLKL, LPAA…SFSL, AYAT…HFIF, and EPFN…VFLL.

This sequence belongs to the drug/metabolite transporter (DMT) superfamily. Small multidrug resistance (SMR) (TC 2.A.7.1) family. EbrA/EbrB subfamily. In terms of assembly, the efflux pump is composed of EbrA and EbrB.

The protein localises to the cell membrane. Functionally, part of a multidrug efflux pump. Confers resistance to cationic lipophilic dyes such as ethidium bromide, acriflavine, pyronine Y and safranin O. The efflux is probably coupled to an influx of protons. The chain is Multidrug resistance protein EbrB (ebrB) from Bacillus licheniformis (strain ATCC 14580 / DSM 13 / JCM 2505 / CCUG 7422 / NBRC 12200 / NCIMB 9375 / NCTC 10341 / NRRL NRS-1264 / Gibson 46).